The chain runs to 987 residues: Ephrin type-B receptor 4 (987 aa).

An N-terminal signal peptide occupies residues Met-1–Ala-15. The Extracellular segment spans residues Leu-16 to Ala-539. Positions Glu-17–Val-202 constitute an Eph LBD domain. 2 cysteine pairs are disulfide-bonded: Cys-61-Cys-184 and Cys-97-Cys-107. N-linked (GlcNAc...) asparagine glycosylation is found at Asn-203, Asn-335, and Asn-426. 2 consecutive Fibronectin type-III domains span residues Pro-323–Glu-432 and Ala-436–Asp-529. A helical transmembrane segment spans residues Leu-540–Val-560. The Cytoplasmic portion of the chain corresponds to Leu-561 to Tyr-987. The region spanning Val-615 to Leu-899 is the Protein kinase domain. ATP contacts are provided by residues Ile-621–Val-629 and Lys-647. Residue Asp-740 is the Proton acceptor of the active site. Ser-769, Ser-770, Ser-911, and Ser-943 each carry phosphoserine. In terms of domain architecture, SAM spans Ser-907–Gln-971. The disordered stretch occupies residues Val-965 to Tyr-987. Thr-976 is subject to Phosphothreonine. Residues Thr-976–Tyr-987 show a composition bias toward gly residues. The PDZ-binding signature appears at Pro-985–Tyr-987. Tyr-987 carries the phosphotyrosine modification.

The protein belongs to the protein kinase superfamily. Tyr protein kinase family. Ephrin receptor subfamily. Heterotetramer upon binding of the ligand. The heterotetramer is composed of an ephrin dimer and a receptor dimer. Oligomerization is probably required to induce biological responses. Interacts with RASA1; the interaction depends on EPHB4 tyrosine-phosphorylation. In terms of processing, phosphorylated; autophosphorylation is stimulated by EFNB2. As to expression, abundantly expressed in placenta but also detected in kidney, liver, lung, pancreas, skeletal muscle and heart. Expressed in primitive and myeloid, but not lymphoid, hematopoietic cells. Also observed in cell lines derived from liver, breast, colon, lung, melanocyte and cervix.

Its subcellular location is the cell membrane. The catalysed reaction is L-tyrosyl-[protein] + ATP = O-phospho-L-tyrosyl-[protein] + ADP + H(+). Functionally, receptor tyrosine kinase which binds promiscuously transmembrane ephrin-B family ligands residing on adjacent cells, leading to contact-dependent bidirectional signaling into neighboring cells. The signaling pathway downstream of the receptor is referred to as forward signaling while the signaling pathway downstream of the ephrin ligand is referred to as reverse signaling. Together with its cognate ligand/functional ligand EFNB2 it is involved in the regulation of cell adhesion and migration, and plays a central role in heart morphogenesis, angiogenesis and blood vessel remodeling and permeability. EPHB4-mediated forward signaling controls cellular repulsion and segregation from EFNB2-expressing cells. The protein is Ephrin type-B receptor 4 (EPHB4) of Homo sapiens (Human).